Here is a 439-residue protein sequence, read N- to C-terminus: SET domain-containing protein 4 (439 aa).

The span at 1–19 shows a compositional bias: basic residues; it reads MQRRRGRTERARKRRRRSS. A disordered region spans residues 1 to 25; the sequence is MQRRRGRTERARKRRRRSSGSRAVN. The region spanning 47–272 is the SET domain; it reads TDLVPASFPG…KHQEVFICYG (226 aa). An S-adenosyl-L-methionine-binding site is contributed by Tyr271.

The protein belongs to the class V-like SAM-binding methyltransferase superfamily. SETD4 family. Forms a ternary complex with TBK1 and ZNF268; the interaction with TBK1 is ZNF268-dependent and leads to TBK1 monomethylation. In terms of tissue distribution, expressed in the forebrain subventricular zone, in quiescent neural stem cells.

It is found in the cytoplasm. Its subcellular location is the cytosol. The protein localises to the nucleus. It catalyses the reaction L-lysyl(4)-[histone H3] + S-adenosyl-L-methionine = N(6)-methyl-L-lysyl(4)-[histone H3] + S-adenosyl-L-homocysteine + H(+). The catalysed reaction is N(6)-methyl-L-lysyl(4)-[histone H3] + S-adenosyl-L-methionine = N(6),N(6)-dimethyl-L-lysyl(4)-[histone H3] + S-adenosyl-L-homocysteine + H(+). It carries out the reaction L-lysyl(20)-[histone H4] + S-adenosyl-L-methionine = N(6)-methyl-L-lysyl(20)-[histone H4] + S-adenosyl-L-homocysteine + H(+). The enzyme catalyses N(6)-methyl-L-lysyl(20)-[histone H4] + S-adenosyl-L-methionine = N(6),N(6)-dimethyl-L-lysyl(20)-[histone H4] + S-adenosyl-L-homocysteine + H(+). It catalyses the reaction N(6),N(6)-dimethyl-L-lysyl(20)-[histone H4] + S-adenosyl-L-methionine = N(6),N(6),N(6)-trimethyl-L-lysyl(20)-[histone H4] + S-adenosyl-L-homocysteine + H(+). The catalysed reaction is L-lysyl-[protein] + S-adenosyl-L-methionine = N(6)-methyl-L-lysyl-[protein] + S-adenosyl-L-homocysteine + H(+). Functionally, protein-lysine N-methyltransferase that methylates both histones and non-histone proteins. Via its catalytic activity, regulates many processes, including cell proliferation, cell differentiation, inflammatory response and apoptosis. Regulates the inflammatory response by mediating mono- and dimethylation of 'Lys-4' of histone H3 (H3K4me1 and H3K4me2, respectively), leading to activate the transcription of pro-inflammatory cytokines IL6 and TNF-alpha. Also involved in the regulation of stem cell quiescence by catalyzing the trimethylation of 'Lys-20' of histone H4 (H4K20me3), thereby promoting heterochromatin formation. In the brain, epigenetically controls quiescence of neural stem cells for sustaining a protected neural stem cell population and maintaining a stem cell reservoir for neurogenesis. Involved in proliferation, migration, paracrine and myogenic differentiation of bone marrow mesenchymal stem cells (BMSCs). Through the catalysis of XRCC5/Ku70 trimethylation, regulates BAX-mediated apoptosis. SETD4-catalyzed XRCC5 methylation results in XRCC5 translocation to the cytoplasm, where it interacts with BAX, sequestering it from the mitochondria, hence preventing BAX-mediated apoptosis. The chain is SET domain-containing protein 4 from Mus musculus (Mouse).